Here is a 492-residue protein sequence, read N- to C-terminus: Katanin p60 ATPase-containing subunit A1 (492 aa).

Positions 91–158 (PAHDGEVWSL…MKPVRAREKK (68 aa)) are disordered. Positions 138-147 (LPSSKNTNNV) are enriched in polar residues. 250 to 257 (GPPGTGKT) is a binding site for ATP.

This sequence belongs to the AAA ATPase family. Katanin p60 subunit A1 subfamily. In terms of assembly, can homooligomerize into hexameric rings, which may be promoted by interaction with microtubules. Interacts with katnb1, which may serve as a targeting subunit.

The protein localises to the cytoplasm. The protein resides in the cytoskeleton. It localises to the microtubule organizing center. It is found in the centrosome. Its subcellular location is the spindle pole. The protein localises to the spindle. It catalyses the reaction n ATP + n H2O + a microtubule = n ADP + n phosphate + (n+1) alpha/beta tubulin heterodimers.. Its activity is regulated as follows. ATPase activity is stimulated by microtubules, which promote homooligomerization. ATP-dependent microtubule severing is stimulated by interaction with katnb1. Its function is as follows. Catalytic subunit of a complex which severs microtubules in an ATP-dependent manner. Microtubule severing may promote rapid reorganization of cellular microtubule arrays and the release of microtubules from the centrosome following nucleation. This chain is Katanin p60 ATPase-containing subunit A1 (katna1), found in Xenopus tropicalis (Western clawed frog).